The following is a 300-amino-acid chain: NAD kinase (300 aa).

Residue D75 is the Proton acceptor of the active site. Residues 75–76, 149–150, R177, D179, 190–195, A214, and Q248 each bind NAD(+); these read DG, ND, and TAYALS.

Belongs to the NAD kinase family. A divalent metal cation serves as cofactor.

It localises to the cytoplasm. It carries out the reaction NAD(+) + ATP = ADP + NADP(+) + H(+). Functionally, involved in the regulation of the intracellular balance of NAD and NADP, and is a key enzyme in the biosynthesis of NADP. Catalyzes specifically the phosphorylation on 2'-hydroxyl of the adenosine moiety of NAD to yield NADP. This chain is NAD kinase, found in Paraburkholderia phytofirmans (strain DSM 17436 / LMG 22146 / PsJN) (Burkholderia phytofirmans).